Here is an 81-residue protein sequence, read N- to C-terminus: Small ribosomal subunit protein bS16 (81 aa).

The protein belongs to the bacterial ribosomal protein bS16 family.

This chain is Small ribosomal subunit protein bS16, found in Neisseria gonorrhoeae (strain ATCC 700825 / FA 1090).